Consider the following 102-residue polypeptide: Small ribosomal subunit protein uS10 (102 aa).

This sequence belongs to the universal ribosomal protein uS10 family. In terms of assembly, part of the 30S ribosomal subunit.

Functionally, involved in the binding of tRNA to the ribosomes. The polypeptide is Small ribosomal subunit protein uS10 (Leuconostoc citreum (strain KM20)).